Consider the following 206-residue polypeptide: Small ribosomal subunit protein uS4A (206 aa).

An S4 RNA-binding domain is found at M98–N163.

This sequence belongs to the universal ribosomal protein uS4 family. In terms of assembly, part of the 30S ribosomal subunit. Contacts protein S5. The interaction surface between S4 and S5 is involved in control of translational fidelity.

Functionally, one of the primary rRNA binding proteins, it binds directly to 16S rRNA where it nucleates assembly of the body of the 30S subunit. With S5 and S12 plays an important role in translational accuracy. In Clostridium perfringens (strain ATCC 13124 / DSM 756 / JCM 1290 / NCIMB 6125 / NCTC 8237 / Type A), this protein is Small ribosomal subunit protein uS4A.